A 485-amino-acid polypeptide reads, in one-letter code: Solute carrier family 35 member F4 (485 aa).

Polar residues-rich tracts occupy residues 32 to 42 (SQKSTTRSSVT) and 50 to 64 (CPSS…LSPL). Disordered stretches follow at residues 32 to 64 (SQKS…LSPL) and 78 to 111 (QSRG…SSQE). Residues 88–98 (RRVERQSRSGD) are compositionally biased toward basic and acidic residues. Positions 99-111 (DGTQTRPESSSQE) are enriched in polar residues. Transmembrane regions (helical) follow at residues 129–149 (IWGL…TQIV), 156–176 (FYCP…FFPV), 217–234 (APFS…LLAL), 241–261 (DVSA…WIVL), 265–285 (FMGV…MMAY), 294–314 (IIGV…KVLF), 329–349 (FVST…IILY), 359–381 (FAAL…NILV), 383–405 (VGVV…PGNA), and 414–434 (VIFN…FLLM). The EamA domain maps to 225–285 (LTNYLYLLAL…AITGIVMMAY (61 aa)).

It belongs to the SLC35F solute transporter family.

The protein localises to the membrane. Its function is as follows. Putative solute transporter. This chain is Solute carrier family 35 member F4 (Slc35f4), found in Mus musculus (Mouse).